Reading from the N-terminus, the 634-residue chain is Chaperone protein HtpG (634 aa).

Residues 1-342 (MTVDTDKQTL…SADLSLNVSR (342 aa)) form an a; substrate-binding region. The interval 343-559 (EILQSGPVVD…QGDLGLQMRQ (217 aa)) is b. Positions 560–634 (LLEASGQAVP…LNKLLLELSA (75 aa)) are c.

Belongs to the heat shock protein 90 family. Homodimer.

It localises to the cytoplasm. Molecular chaperone. Has ATPase activity. This chain is Chaperone protein HtpG, found in Xanthomonas campestris pv. campestris (strain 8004).